The sequence spans 520 residues: Sensory neuron membrane protein 1 (520 aa).

Topologically, residues 1–5 (MKPKK) are cytoplasmic. A helical membrane pass occupies residues 6–26 (LGIIGGSLLAFGILICAIAFP). Residues 27-451 (PFLRSQVKKQ…KLKTVFKTIS (425 aa)) lie on the Extracellular side of the membrane. Residues asparagine 64, asparagine 224, and asparagine 268 are each glycosylated (N-linked (GlcNAc...) asparagine). 3 cysteine pairs are disulfide-bonded: cysteine 264-cysteine 329, cysteine 293-cysteine 348, and cysteine 331-cysteine 337. A helical transmembrane segment spans residues 452–472 (IVGFMKWFTIVSGTCVSGAAA). Over 473–520 (ALFFKNKDKNKLDITKVTPQKGEEKKWPNQMTISTIQSAAVPPNLDAD) the chain is Cytoplasmic.

This sequence belongs to the CD36 family.

It is found in the cell membrane. Plays an olfactory role that is not restricted to pheromone sensitivity. In Apis mellifera (Honeybee), this protein is Sensory neuron membrane protein 1.